A 342-amino-acid chain; its full sequence is Probable dual-specificity RNA methyltransferase RlmN (342 aa).

Residue Glu-91 is the Proton acceptor of the active site. The 230-residue stretch at 97–326 (YKFGNTACVS…CTVRRELGSD (230 aa)) folds into the Radical SAM core domain. An intrachain disulfide couples Cys-104 to Cys-331. Residues Cys-111, Cys-115, and Cys-118 each coordinate [4Fe-4S] cluster. S-adenosyl-L-methionine-binding positions include 157-158 (GE), Ser-189, 212-214 (SLH), and Asn-288. Cys-331 (S-methylcysteine intermediate) is an active-site residue.

It belongs to the radical SAM superfamily. RlmN family. Requires [4Fe-4S] cluster as cofactor.

Its subcellular location is the cytoplasm. The enzyme catalyses adenosine(2503) in 23S rRNA + 2 reduced [2Fe-2S]-[ferredoxin] + 2 S-adenosyl-L-methionine = 2-methyladenosine(2503) in 23S rRNA + 5'-deoxyadenosine + L-methionine + 2 oxidized [2Fe-2S]-[ferredoxin] + S-adenosyl-L-homocysteine. The catalysed reaction is adenosine(37) in tRNA + 2 reduced [2Fe-2S]-[ferredoxin] + 2 S-adenosyl-L-methionine = 2-methyladenosine(37) in tRNA + 5'-deoxyadenosine + L-methionine + 2 oxidized [2Fe-2S]-[ferredoxin] + S-adenosyl-L-homocysteine. In terms of biological role, specifically methylates position 2 of adenine 2503 in 23S rRNA and position 2 of adenine 37 in tRNAs. This chain is Probable dual-specificity RNA methyltransferase RlmN, found in Caldanaerobacter subterraneus subsp. tengcongensis (strain DSM 15242 / JCM 11007 / NBRC 100824 / MB4) (Thermoanaerobacter tengcongensis).